An 89-amino-acid polypeptide reads, in one-letter code: MSLSVEAKAKILAEFGRCENDTGSSEVQVALLTAQINHLQGHFKEHIHDHHSRRGLLRMVSTRRKLLAYLKRTENVRYQELIKKLGLRR.

This sequence belongs to the universal ribosomal protein uS15 family. In terms of assembly, part of the 30S ribosomal subunit. Forms a bridge to the 50S subunit in the 70S ribosome, contacting the 23S rRNA.

Functionally, one of the primary rRNA binding proteins, it binds directly to 16S rRNA where it helps nucleate assembly of the platform of the 30S subunit by binding and bridging several RNA helices of the 16S rRNA. In terms of biological role, forms an intersubunit bridge (bridge B4) with the 23S rRNA of the 50S subunit in the ribosome. In Shewanella piezotolerans (strain WP3 / JCM 13877), this protein is Small ribosomal subunit protein uS15.